Consider the following 668-residue polypeptide: UvrABC system protein B (668 aa).

The Helicase ATP-binding domain occupies 36–276 (DNIKGGEKAQ…EEAIKNIMEE (241 aa)). 49–56 (GATGTGKT) contacts ATP. The short motif at 102–125 (YYDYYQPEAYVPSSDTYIEKDSSV) is the Beta-hairpin element. One can recognise a Helicase C-terminal domain in the interval 440–606 (QMDDLLGEIN…TIKKEIRDLI (167 aa)). The region spanning 632–667 (QEAIKKLQKQMHEAAELLDFELAAQIRDMVLELKSM) is the UVR domain.

This sequence belongs to the UvrB family. Forms a heterotetramer with UvrA during the search for lesions. Interacts with UvrC in an incision complex.

It is found in the cytoplasm. Functionally, the UvrABC repair system catalyzes the recognition and processing of DNA lesions. A damage recognition complex composed of 2 UvrA and 2 UvrB subunits scans DNA for abnormalities. Upon binding of the UvrA(2)B(2) complex to a putative damaged site, the DNA wraps around one UvrB monomer. DNA wrap is dependent on ATP binding by UvrB and probably causes local melting of the DNA helix, facilitating insertion of UvrB beta-hairpin between the DNA strands. Then UvrB probes one DNA strand for the presence of a lesion. If a lesion is found the UvrA subunits dissociate and the UvrB-DNA preincision complex is formed. This complex is subsequently bound by UvrC and the second UvrB is released. If no lesion is found, the DNA wraps around the other UvrB subunit that will check the other stand for damage. This chain is UvrABC system protein B, found in Streptococcus thermophilus (strain ATCC BAA-491 / LMD-9).